Here is a 632-residue protein sequence, read N- to C-terminus: Bifunctional protein GlmU (632 aa).

Residues 1–229 (MAERELSVAI…PQEIVGVNDR (229 aa)) form a pyrophosphorylase region. Residues 11–14 (LAAG), Lys-25, Gln-76, and 81–82 (GT) contribute to the UDP-N-acetyl-alpha-D-glucosamine site. A Mg(2+)-binding site is contributed by Asp-106. Residues Gly-143, Glu-158, Asn-173, and Asn-227 each contribute to the UDP-N-acetyl-alpha-D-glucosamine site. Asn-227 lines the Mg(2+) pocket. The linker stretch occupies residues 230 to 250 (RQLAQAYQILQDRLKEAWMEA). Positions 251-632 (GVTFVDPDSS…ADNSRPKSLQ (382 aa)) are N-acetyltransferase. Positions 332 and 350 each coordinate UDP-N-acetyl-alpha-D-glucosamine. The active-site Proton acceptor is His-362. Residues Tyr-365 and Asn-376 each contribute to the UDP-N-acetyl-alpha-D-glucosamine site. Residues Ala-379, 385–386 (NY), Ala-422, and Arg-441 each bind acetyl-CoA. The disordered stretch occupies residues 600-632 (VAGDPCWPSPPPQPQQNQQTKPEADNSRPKSLQ). The span at 621 to 632 (PEADNSRPKSLQ) shows a compositional bias: basic and acidic residues.

It in the N-terminal section; belongs to the N-acetylglucosamine-1-phosphate uridyltransferase family. The protein in the C-terminal section; belongs to the transferase hexapeptide repeat family. In terms of assembly, homotrimer. Mg(2+) serves as cofactor.

The protein localises to the cytoplasm. It catalyses the reaction alpha-D-glucosamine 1-phosphate + acetyl-CoA = N-acetyl-alpha-D-glucosamine 1-phosphate + CoA + H(+). The catalysed reaction is N-acetyl-alpha-D-glucosamine 1-phosphate + UTP + H(+) = UDP-N-acetyl-alpha-D-glucosamine + diphosphate. It participates in nucleotide-sugar biosynthesis; UDP-N-acetyl-alpha-D-glucosamine biosynthesis; N-acetyl-alpha-D-glucosamine 1-phosphate from alpha-D-glucosamine 6-phosphate (route II): step 2/2. Its pathway is nucleotide-sugar biosynthesis; UDP-N-acetyl-alpha-D-glucosamine biosynthesis; UDP-N-acetyl-alpha-D-glucosamine from N-acetyl-alpha-D-glucosamine 1-phosphate: step 1/1. The protein operates within bacterial outer membrane biogenesis; LPS lipid A biosynthesis. Catalyzes the last two sequential reactions in the de novo biosynthetic pathway for UDP-N-acetylglucosamine (UDP-GlcNAc). The C-terminal domain catalyzes the transfer of acetyl group from acetyl coenzyme A to glucosamine-1-phosphate (GlcN-1-P) to produce N-acetylglucosamine-1-phosphate (GlcNAc-1-P), which is converted into UDP-GlcNAc by the transfer of uridine 5-monophosphate (from uridine 5-triphosphate), a reaction catalyzed by the N-terminal domain. This Synechococcus sp. (strain JA-2-3B'a(2-13)) (Cyanobacteria bacterium Yellowstone B-Prime) protein is Bifunctional protein GlmU.